The sequence spans 376 residues: QANDLDYASLPDSVVEQVRTNGQLALEGDKGELGEQAILSLAQALDTYIPTPERAVTALDTMPSAVGYQPTLAEEMGVLQERYLADTANKGDLSNIPFGTVNLLAYNNYQAYLTMLGKTTDVTGNCELPEGVEMVMPGDNIKNPGVTKYLPTTSYSLPHVNVGTIGHVDHGKTTLTAALTRYLADLVDDAELLELVEMEVRDLLSTYDFPGDDTPIIIGSARVSAAASELAVQLKMAVVHDDTNPTSAAQTNAPWGLARLSSYWGLTLHLPNLTEEQGVTIDEDHPLFIYLPCGIGGAPGGAAYGLKNVFLGSSAGTTREVEHSDKPLHDISYAYLGDARQNWVMTAQTTQAIRLEPSATAGFAGPEFIVNSNQGR.

Its function is as follows. Has antibacterial activity against Listeria monocytogenes. The sequence is that of PCM7-4 from Bacillus velezensis.